Reading from the N-terminus, the 248-residue chain is MALLEICCYSMECALTAQQNGADRVELCAAPKEGGLTPSLGVLKSVRQRVTIPVHPIIRPRGGDFCYSDGEFAAILEDVRTVRELGFPGLVTGVLDVDGNVDMSRMEKIMAAAGPLAVTFHRAFDMCANPLNTLNNLAELGIARVLTSGQKSDALQGLSKIMELIAHRDAPIIMAGAGVRAENLHHFLDAGVLEVHSSAGAWQASPMRYRNQGLSMSSDAHADEYSRYVVDGAAVAEMKGIIERHQAK.

This sequence belongs to the CutC family. In terms of assembly, homodimer.

It localises to the cytoplasm. The chain is PF03932 family protein CutC from Escherichia coli O157:H7.